Consider the following 364-residue polypeptide: Apyrase (364 aa).

Positions 1–35 (MRSSYRVGNPIRFQPTNVVGLLLLSLVLSFMLVQS) are cleaved as a signal peptide.

It belongs to the apyrase family. The cofactor is Ca(2+). In terms of tissue distribution, salivary gland (at protein level).

It localises to the secreted. The catalysed reaction is a ribonucleoside 5'-triphosphate + 2 H2O = a ribonucleoside 5'-phosphate + 2 phosphate + 2 H(+). Facilitates hematophagy by inhibiting ADP-dependent platelet aggregation in the host. Cleaves adenosine triphosphate (ATP) and adenosine diphosphate (ADP) to adenosine monophosphate (AMP) and inorganic phosphate in calcium-dependent manner. The chain is Apyrase from Cimex lectularius (Bed bug).